Here is a 419-residue protein sequence, read N- to C-terminus: Tyrosine--tRNA ligase 2 (419 aa).

Y34 lines the L-tyrosine pocket. The 'HIGH' region motif lies at 39 to 48 (PTGDSMHIGH). L-tyrosine-binding residues include Y168 and Q172. The 'KMSKS' region motif lies at 230–234 (KFGKS). K233 lines the ATP pocket. The S4 RNA-binding domain maps to 352 to 418 (KNIVEWLVDL…GKKNYSLVKL (67 aa)).

The protein belongs to the class-I aminoacyl-tRNA synthetase family. TyrS type 1 subfamily. Homodimer.

It localises to the cytoplasm. It catalyses the reaction tRNA(Tyr) + L-tyrosine + ATP = L-tyrosyl-tRNA(Tyr) + AMP + diphosphate + H(+). Catalyzes the attachment of tyrosine to tRNA(Tyr) in a two-step reaction: tyrosine is first activated by ATP to form Tyr-AMP and then transferred to the acceptor end of tRNA(Tyr). The sequence is that of Tyrosine--tRNA ligase 2 from Bacillus cereus (strain ATCC 10987 / NRS 248).